The chain runs to 473 residues: Cysteine--tRNA ligase (473 aa).

Cysteine 28 contributes to the Zn(2+) binding site. The 'HIGH' region motif lies at 30-40; it reads MTVYDYCHLGH. Zn(2+)-binding residues include cysteine 209, histidine 234, and glutamate 238. Residues 282 to 286 carry the 'KMSKS' region motif; sequence KMSKS. Lysine 285 provides a ligand contact to ATP.

The protein belongs to the class-I aminoacyl-tRNA synthetase family. As to quaternary structure, monomer. The cofactor is Zn(2+).

The protein localises to the cytoplasm. It catalyses the reaction tRNA(Cys) + L-cysteine + ATP = L-cysteinyl-tRNA(Cys) + AMP + diphosphate. The polypeptide is Cysteine--tRNA ligase (Neisseria gonorrhoeae (strain ATCC 700825 / FA 1090)).